A 295-amino-acid polypeptide reads, in one-letter code: MSVSRMIPRLVRASASPMAVPTAFRRSFGSSVVCAKDNDGPRGPSTPSTAPEYRQNQTSKPPNQFMPNSTSTMTNDYPKVGEKASPPELLNSVDPNYRPADPYSGKVQHFTGGRQEPGAQKPELGLGEMEGITFKVEPLQRSGEDTTTMRARLLYQSRKRGILESDLLLSTFADVYLAKMNHEQLQEYDRFLDENDWDIYYWATQDAPEEGTPAEDTPTETWQRTGAKSGEWRQTIGAFKAAYRPVPTRWADSEVLRLLREHVRDNSATGFHAAKNKKTGGSGLGRMPNIQVFDS.

Disordered stretches follow at residues 35–90 (AKDN…PELL), 208–227 (PEEGTPAEDTPTETWQRTGA), and 269–295 (TGFHAAKNKKTGGSGLGRMPNIQVFDS). Over residues 45 to 75 (STPSTAPEYRQNQTSKPPNQFMPNSTSTMTN) the composition is skewed to polar residues.

Belongs to the SDHAF2 family. Interacts with the flavoprotein subunit within the SDH catalytic dimer.

The protein localises to the mitochondrion matrix. In terms of biological role, plays an essential role in the assembly of succinate dehydrogenase (SDH), an enzyme complex (also referred to as respiratory complex II) that is a component of both the tricarboxylic acid (TCA) cycle and the mitochondrial electron transport chain, and which couples the oxidation of succinate to fumarate with the reduction of ubiquinone (coenzyme Q) to ubiquinol. Required for flavinylation (covalent attachment of FAD) of the flavoprotein subunit of the SDH catalytic dimer. In Aspergillus terreus (strain NIH 2624 / FGSC A1156), this protein is Succinate dehydrogenase assembly factor 2, mitochondrial.